Here is an 861-residue protein sequence, read N- to C-terminus: E3 ubiquitin-protein ligase SH3RF1 (861 aa).

An RING-type zinc finger spans residues 12-53 (CPVCLERLDASAKVLPCQHTFCKRCLLGIVSSRNELRCPECR). 2 SH3 domains span residues 132-191 (PQLP…IIKP) and 194-257 (QPPP…FNSA). Residues 268–319 (SGVDTGEGSSGTTHSSNSQKQADAKKNTKKRHSFTSLTMSNKSSQSVQNRHS) form a disordered region. The segment covering 273–285 (GEGSSGTTHSSNS) has biased composition (low complexity). Residues 301–317 (FTSLTMSNKSSQSVQNR) show a composition bias toward polar residues. In terms of domain architecture, SH3 3 spans 435–496 (TRPSVFVAIY…PGNYVAPVTR (62 aa)). Residues 684–731 (NSAANKQDKDSKKEKKGLLKLLSGASTKRKPRSSPPHSPTQELEQTNS) form a disordered region. Basic and acidic residues predominate over residues 689–700 (KQDKDSKKEKKG). In terms of domain architecture, SH3 4 spans 802–861 (RPCERYRVVVSYPPQSEAELELKEGDIVFVHKKREDGWFKGTLQRNGKTGLFPGSFVENI).

Belongs to the SH3RF family. Post-translationally, autoubiquitinated. Ubiquitinated by SH3RF2, leading to proteasome-mediated degradation.

It localises to the cytoplasm. The protein localises to the perinuclear region. It is found in the cell projection. Its subcellular location is the lamellipodium. The protein resides in the golgi apparatus. It localises to the trans-Golgi network. It catalyses the reaction S-ubiquitinyl-[E2 ubiquitin-conjugating enzyme]-L-cysteine + [acceptor protein]-L-lysine = [E2 ubiquitin-conjugating enzyme]-L-cysteine + N(6)-ubiquitinyl-[acceptor protein]-L-lysine.. Its pathway is protein modification; protein ubiquitination. Has E3 ubiquitin-protein ligase activity. In the absence of an external substrate, it can catalyze self-ubiquitination. Acts as a scaffold protein that contributes to the effective activation of the JNK signaling pathway. The chain is E3 ubiquitin-protein ligase SH3RF1 (sh3rf1) from Xenopus tropicalis (Western clawed frog).